Consider the following 189-residue polypeptide: GTPase NRas (189 aa).

Residues 10-18 and 29-30 each bind GTP; these read GAGGVGKSA and VD. The short motif at 32 to 40 is the Effector region element; it reads YDPTIEDSY. 57–61 provides a ligand contact to GTP; it reads DTAGQ. Position 89 is a phosphoserine (serine 89). 116-119 is a GTP binding site; it reads NKCD. The hypervariable region stretch occupies residues 166-185; it reads YRMKKLNSSEDGTQGCMGLP. Lysine 170 participates in a covalent cross-link: Glycyl lysine isopeptide (Lys-Gly) (interchain with G-Cter in ubiquitin). Residue cysteine 181 is the site of S-palmitoyl cysteine attachment. Cysteine 186 carries S-farnesyl cysteine lipidation. Positions 187 to 189 are cleaved as a propeptide — removed in mature form; that stretch reads VVM.

This sequence belongs to the small GTPase superfamily. Ras family. In terms of assembly, interacts (active GTP-bound form preferentially) with RGS14. Interacts (active GTP-bound form) with RASSF7. Interacts (active GTP-bound form) with both SHOC2 and PP1c (all isoforms) to form a tertiary complex; SHOC2 and PP1c preferably bind M-Ras/MRAS, but they also bind K-Ras/KRAS, N-Ras/NRAS and H-Ras/HRAS. Palmitoylated by the ZDHHC9-GOLGA7 complex. Depalmitoylated by ABHD17A, ABHD17B and ABHD17C. A continuous cycle of de- and re-palmitoylation regulates rapid exchange between plasma membrane and Golgi. Post-translationally, acetylation at Lys-104 prevents interaction with guanine nucleotide exchange factors (GEFs). In terms of processing, ubiquitinated by the BCR(LZTR1) E3 ubiquitin ligase complex at Lys-170 in a non-degradative manner, leading to inhibit Ras signaling by decreasing Ras association with membranes. Phosphorylation at Ser-89 enhances NRAS association with its downstream effectors.

Its subcellular location is the cell membrane. It localises to the golgi apparatus membrane. The enzyme catalyses GTP + H2O = GDP + phosphate + H(+). With respect to regulation, alternates between an inactive form bound to GDP and an active form bound to GTP. Activated by a guanine nucleotide-exchange factor (GEF) and inactivated by a GTPase-activating protein (GAP). Ras proteins bind GDP/GTP and possess intrinsic GTPase activity. This chain is GTPase NRas (Nras), found in Rattus norvegicus (Rat).